The sequence spans 213 residues: FMN-dependent NADH:quinone oxidoreductase (213 aa).

Residue 17-19 (SSS) participates in FMN binding.

This sequence belongs to the azoreductase type 1 family. In terms of assembly, homodimer. FMN serves as cofactor.

The catalysed reaction is 2 a quinone + NADH + H(+) = 2 a 1,4-benzosemiquinone + NAD(+). The enzyme catalyses N,N-dimethyl-1,4-phenylenediamine + anthranilate + 2 NAD(+) = 2-(4-dimethylaminophenyl)diazenylbenzoate + 2 NADH + 2 H(+). In terms of biological role, quinone reductase that provides resistance to thiol-specific stress caused by electrophilic quinones. Functionally, also exhibits azoreductase activity. Catalyzes the reductive cleavage of the azo bond in aromatic azo compounds to the corresponding amines. The sequence is that of FMN-dependent NADH:quinone oxidoreductase from Ruminiclostridium cellulolyticum (strain ATCC 35319 / DSM 5812 / JCM 6584 / H10) (Clostridium cellulolyticum).